The following is a 222-amino-acid chain: Thymidylate kinase (222 aa).

Position 7-14 (7-14) interacts with ATP; it reads GIDGAGKS.

This sequence belongs to the thymidylate kinase family.

It carries out the reaction dTMP + ATP = dTDP + ADP. Its function is as follows. Phosphorylation of dTMP to form dTDP in both de novo and salvage pathways of dTTP synthesis. In Chlorobium chlorochromatii (strain CaD3), this protein is Thymidylate kinase.